The chain runs to 252 residues: Phosphosulfolactate synthase (252 aa).

The protein belongs to the phosphosulfolactate synthase family.

The enzyme catalyses (2R)-O-phospho-3-sulfolactate = phosphoenolpyruvate + sulfite + H(+). Catalyzes the addition of sulfite to phosphoenolpyruvate (PEP) to yield (2R)-phospho-3-sulfolactate (PSL). Is probably involved in the biosynthesis of L-sulfolactate, which is a major constituent of sporulating cells and mature spores. The protein is Phosphosulfolactate synthase (yitD) of Bacillus subtilis (strain 168).